The sequence spans 584 residues: Putative adenine deaminase BA_3032/GBAA_3032/BAS2818 (584 aa).

The protein belongs to the metallo-dependent hydrolases superfamily. Adenine deaminase family.

It catalyses the reaction adenine + H2O + H(+) = hypoxanthine + NH4(+). This Bacillus anthracis protein is Putative adenine deaminase BA_3032/GBAA_3032/BAS2818.